The chain runs to 185 residues: Superoxide dismutase [Cu-Zn] (185 aa).

The first 18 residues, 1–18, serve as a signal peptide directing secretion; it reads MTAFYKLCGMSMLSLVLA. Cu cation-binding residues include H85, H87, and H102. A disulfide bridge links C92 with C180. H102, H111, H120, and D123 together coordinate Zn(2+). H158 is a Cu cation binding site.

The protein belongs to the Cu-Zn superoxide dismutase family. As to quaternary structure, homodimer. Cu cation is required as a cofactor. It depends on Zn(2+) as a cofactor.

The protein localises to the periplasm. It catalyses the reaction 2 superoxide + 2 H(+) = H2O2 + O2. In terms of biological role, destroys radicals which are normally produced within the cells and which are toxic to biological systems. This is Superoxide dismutase [Cu-Zn] (sodC) from Francisella tularensis subsp. holarctica (strain LVS).